The sequence spans 213 residues: Ribonuclease HII (213 aa).

Residues 2–213 form the RNase H type-2 domain; that stretch reads GRVAGIDEAG…KEWATWKRLR (212 aa). Residues aspartate 8, glutamate 9, and aspartate 113 each contribute to the a divalent metal cation site.

This sequence belongs to the RNase HII family. Requires Mn(2+) as cofactor. The cofactor is Mg(2+).

It is found in the cytoplasm. The enzyme catalyses Endonucleolytic cleavage to 5'-phosphomonoester.. Endonuclease that specifically degrades the RNA of RNA-DNA hybrids. In Thermofilum pendens (strain DSM 2475 / Hrk 5), this protein is Ribonuclease HII.